Here is a 127-residue protein sequence, read N- to C-terminus: Longitudinals lacking protein-like (127 aa).

Residues 33–98 (TDVTLACEGQ…MYAGEVNVSQ (66 aa)) form the BTB domain.

The BTB domain interacts with the BTB domain of Trl in vitro. Found in a Pc-containing complex.

Its subcellular location is the nucleus. Functionally, required, together with Trl, for maintaining the repressed state of target genes including homeotic genes Scr and Ubx. May also be involved in the activation of homeotic genes. Binds to a DNA Polycomb response element (PRE) at the bithorax complex. Also binds to polytene chromosomes at several hundred sites, many of which are shared with Trl and ph-p. Required during embryonic development. The polypeptide is Longitudinals lacking protein-like (Drosophila melanogaster (Fruit fly)).